The primary structure comprises 70 residues: Protein SlyX homolog (70 aa).

This sequence belongs to the SlyX family.

The chain is Protein SlyX homolog from Shewanella baltica (strain OS155 / ATCC BAA-1091).